Reading from the N-terminus, the 619-residue chain is Hypermethylated in cancer 2 protein (619 aa).

In terms of domain architecture, BTB spans 46–109 (CDVIIMVENS…IYTGKLLPSD (64 aa)). Ser-166, Ser-169, and Ser-197 each carry phosphoserine. Disordered stretches follow at residues 180-293 (DVRK…VGNS) and 307-426 (MDVE…GHTG). Over residues 214–228 (LGLGGPAGGEMGLGG) the composition is skewed to gly residues. Residues 247–249 (DLS) are binding to CtBP. Residues 281-293 (APTSTSALPVGNS) show a composition bias toward polar residues. Residues 337-357 (KKDWNKKEPVAGSPFDRRETG) show a composition bias toward basic and acidic residues. A phosphoserine mark is found at Ser-349 and Ser-416. 5 C2H2-type zinc fingers span residues 446–468 (YVCIPCAKGFPSSEQLNAHVETH), 509–531 (FKCSVCEKTYKDPATLRQHEKTH), 537–559 (FPCNICGKMFTQRGTMTRHMRSH), 565–587 (FACDECGMRFTRQYRLTEHMRVH), and 593–615 (YECQLCGGKFTQQRNLISHLRMH).

This sequence belongs to the krueppel C2H2-type zinc-finger protein family. Hic subfamily. Self-associates. Interacts with HIC1.

It localises to the nucleus. Transcriptional repressor. This chain is Hypermethylated in cancer 2 protein (Hic2), found in Mus musculus (Mouse).